Consider the following 734-residue polypeptide: MQRSEGGSETPSTVALRTSTSAQAPVVQPVPASQQRVLVQATGSSQKGAQVQQLPVPRVQQVPQQVQQVQHYHSQQVQYVEGAEAVYPNGTIRAAYSYNPESQLYGQGSGSAYFDSQAGGAQVTTVVSSGGVPTHGMVGIAMDVGGSQIISSGSAYLIHGGMEGGRHHTSHSSRSSSAMLEMAIENLQKSEGIATHKSSLLNSHLQWLLDNYETAEGVSLPRSSLYNHYLRHCQEQKLDPVNAASFGKLIRSVFMGLRTRRLGTRGNSKYHYYGIRLKPDSPLNRMQEDTQYMAMRQTPVHQKQRFKPFHKMDGMGDSLNSGSQHLSSTPEQSVAAQCQHHQQYIDVSHVLPPFPSLDLGSCPLPESISMTDVKKLQSSYRIHCEATLDVVMNLQFHLIEKLWQTFWHSTAPSSDGATTIPNSEEDVEDIRGFPRDKLITLCKYEPIKQWMRSCDHILYQALVEILIPDVLRPVPSTLTQAIRNFAKSLEGWLTSAMTNFPPEIISTKAAVVSAFAQTLRRYTSLNHLAQAARAVLQNTSQINQMLSDLNRVDFANVQEQASWVCQCDESVVQRLELDFKATLQQQSSLDQWAAWLDNVVNQVLKPYDGSLSFPRAARQFLLKWSFYSSMVIRDLTLRSAASFGSFHLIRLLYDEYMFYLVEHRVAQATGETPIAVMGEFSDLSSLMPSLKEQDTSFSDDMTSDGDMSRMSERSLTEPAVKRERIEIPHSLQEI.

A compositionally biased stretch (polar residues) spans 1–23 (MQRSEGGSETPSTVALRTSTSAQ). The disordered stretch occupies residues 1 to 31 (MQRSEGGSETPSTVALRTSTSAQAPVVQPVP). The segment at residues 204–279 (HLQWLLDNYE…YHYYGIRLKP (76 aa)) is a DNA-binding region (RFX-type winged-helix). The segment at 694–722 (DTSFSDDMTSDGDMSRMSERSLTEPAVKR) is disordered. Over residues 706 to 722 (DMSRMSERSLTEPAVKR) the composition is skewed to basic and acidic residues.

It belongs to the RFX family. In terms of assembly, homodimer. Heterodimer; heterodimerizes with other rfx proteins.

Its subcellular location is the nucleus. The protein resides in the cytoplasm. Functionally, transcription factor that acts as a key regulator of ciliogenesis. Specifically regulates expression of genes required for cilium assembly and function. Recognizes and binds the X-box, a regulatory motif with DNA sequence 5'-GTNRCC(0-3N)RGYAAC-3' present on promoters. The polypeptide is DNA-binding protein RFX2 (rfx2) (Danio rerio (Zebrafish)).